The chain runs to 511 residues: 2-isopropylmalate synthase (511 aa).

The 264-residue stretch at isoleucine 6–phenylalanine 269 folds into the Pyruvate carboxyltransferase domain. The Mn(2+) site is built by aspartate 15, histidine 203, histidine 205, and asparagine 239. The segment at valine 394–alanine 511 is regulatory domain.

It belongs to the alpha-IPM synthase/homocitrate synthase family. LeuA type 1 subfamily. Homodimer. The cofactor is Mn(2+).

The protein resides in the cytoplasm. It catalyses the reaction 3-methyl-2-oxobutanoate + acetyl-CoA + H2O = (2S)-2-isopropylmalate + CoA + H(+). The protein operates within amino-acid biosynthesis; L-leucine biosynthesis; L-leucine from 3-methyl-2-oxobutanoate: step 1/4. Functionally, catalyzes the condensation of the acetyl group of acetyl-CoA with 3-methyl-2-oxobutanoate (2-ketoisovalerate) to form 3-carboxy-3-hydroxy-4-methylpentanoate (2-isopropylmalate). The polypeptide is 2-isopropylmalate synthase (Campylobacter jejuni subsp. jejuni serotype O:2 (strain ATCC 700819 / NCTC 11168)).